We begin with the raw amino-acid sequence, 283 residues long: 4-hydroxybenzoate octaprenyltransferase (283 aa).

The next 9 membrane-spanning stretches (helical) occupy residues 16–36 (PIGT…AGAG), 40–60 (LRIV…GCVI), 85–105 (ISAT…FGLV), 108–128 (LNTE…LYPF), 135–155 (LPQI…FTAL), 160–180 (WFIA…YDTE), 204–224 (FDRL…GWIL), 226–246 (LITV…LFAY), and 263–283 (FLHN…HYWF).

This sequence belongs to the UbiA prenyltransferase family. Mg(2+) is required as a cofactor.

The protein localises to the cell inner membrane. The catalysed reaction is all-trans-octaprenyl diphosphate + 4-hydroxybenzoate = 4-hydroxy-3-(all-trans-octaprenyl)benzoate + diphosphate. Its pathway is cofactor biosynthesis; ubiquinone biosynthesis. Catalyzes the prenylation of para-hydroxybenzoate (PHB) with an all-trans polyprenyl group. Mediates the second step in the final reaction sequence of ubiquinone-8 (UQ-8) biosynthesis, which is the condensation of the polyisoprenoid side chain with PHB, generating the first membrane-bound Q intermediate 3-octaprenyl-4-hydroxybenzoate. This is 4-hydroxybenzoate octaprenyltransferase from Idiomarina loihiensis (strain ATCC BAA-735 / DSM 15497 / L2-TR).